Here is a 364-residue protein sequence, read N- to C-terminus: GDSL esterase/lipase At1g29660 (364 aa).

Positions 1-26 (MESYLRKWCLVSVWVLLLGLGFKVKA) are cleaved as a signal peptide. The Nucleophile role is filled by S39. Residues D328 and H331 each act as charge relay system in the active site.

Belongs to the 'GDSL' lipolytic enzyme family. As to expression, found in phloem exudates.

The protein resides in the secreted. It localises to the extracellular space. It is found in the apoplast. In terms of biological role, involved in EDS1-dependent systemic acquired resistance, maybe in phloem-mediated long-distance signaling. The chain is GDSL esterase/lipase At1g29660 from Arabidopsis thaliana (Mouse-ear cress).